The primary structure comprises 345 residues: MTIKPVSQERLPELLRTIPKAELHIHIEGSLEPELMFALAQRNGVSIPYPDVASLRAAYVFDNLQSFLDIYHAGTLVLRTEQDFYDMTHAYLARAAADNVLHAEIFFDPQTHTAHGVSADVVINGLYRACVDARVEFDMNASLILCFLRHLSEQEAFECLEQALPHLDKLVGVGLASSEMGHPPEKFARVFARARELGLRLVAHAGEEGPPAYIWSALDVLKVERIDHGVQAVQDPLLMARLARDRIALTVCPLSNLKLRVFPTLAAHNLGRLLEAGIVATVNSDDPSYFGGYINQNFTQTFAALGLTAQHAYQLAHNSFEASFIDDRLKRQYFDRLAGVFETFE.

Positions 24, 26, and 204 each coordinate Zn(2+). Glu207 functions as the Proton donor in the catalytic mechanism. Asp285 lines the Zn(2+) pocket. Residue Asp286 coordinates substrate.

It belongs to the metallo-dependent hydrolases superfamily. Adenosine and AMP deaminases family. Adenine deaminase type 2 subfamily. Zn(2+) is required as a cofactor.

It catalyses the reaction adenine + H2O + H(+) = hypoxanthine + NH4(+). Functionally, catalyzes the hydrolytic deamination of adenine to hypoxanthine. Plays an important role in the purine salvage pathway and in nitrogen catabolism. This is Adenine deaminase from Albidiferax ferrireducens (strain ATCC BAA-621 / DSM 15236 / T118) (Rhodoferax ferrireducens).